A 129-amino-acid chain; its full sequence is Aldose 1-epimerase (129 aa).

This sequence belongs to the aldose epimerase family.

It catalyses the reaction alpha-D-glucose = beta-D-glucose. It participates in carbohydrate metabolism; hexose metabolism. Mutarotase converts alpha-aldose to the beta-anomer. It is active on D-glucose, L-arabinose, D-xylose, D-galactose, maltose and lactose. The sequence is that of Aldose 1-epimerase (galM) from Lactobacillus helveticus (Lactobacillus suntoryeus).